Reading from the N-terminus, the 519-residue chain is Galactan beta-1,4-galactosyltransferase GALS2 (519 aa).

The helical transmembrane segment at 28–48 (LALMALLVLCTLATLLPFLPS) threads the bilayer. Residues 257–471 (DYLYCGSSLY…YHGSISQRRE (215 aa)) enclose the GT92 domain.

The protein belongs to the glycosyltransferase 92 family. As to expression, expressed in the midrib of mature leaves, root vasculature, flower filaments, siliques and seeds.

Its subcellular location is the golgi apparatus membrane. Its function is as follows. Involved in the biosynthesis of beta-1,4-galactan. Beta-1,4-galactans are abundant polysaccharides in plant cell walls and are found as side-chain of rhamnogalacturonan I, which is a major component of pectin. The polypeptide is Galactan beta-1,4-galactosyltransferase GALS2 (Arabidopsis thaliana (Mouse-ear cress)).